The primary structure comprises 511 residues: Probable G-protein coupled receptor 152 (511 aa).

The tract at residues 1–20 is disordered; sequence MDTAVEANLGAAGHGPRTEL. Topologically, residues 1-33 are extracellular; sequence MDTAVEANLGAAGHGPRTELSDEDYYPQGSWDT. A helical membrane pass occupies residues 34–54; the sequence is VFLVALLLLGLPANGLMAWLA. The Cytoplasmic portion of the chain corresponds to 55 to 65; that stretch reads GSQARHGAGTR. Residues 66-86 form a helical membrane-spanning segment; sequence LALLLLSLALSDFLFLAAATF. At 87-105 the chain is on the extracellular side; the sequence is QILEIQHGGHWPLGTAACR. A disulfide bridge links C104 with C182. The chain crosses the membrane as a helical span at residues 106-126; sequence FYYFLWGVSYSSGLFLLTALS. Residues 127–148 are Cytoplasmic-facing; it reads LDRCLLALCPRWYPGHRPARLP. The chain crosses the membrane as a helical span at residues 149-169; that stretch reads LWVCAGVWVLATLFSVPWLVF. The Extracellular segment spans residues 170 to 194; sequence PEAAVWWYDLVICLDFWDTEELPLR. The helical transmembrane segment at 195-215 threads the bilayer; that stretch reads MLEILGGFLPFLLLLVCHVLT. The Cytoplasmic segment spans residues 216 to 258; that stretch reads QATACRTCCGHQPRRMACHGFARVAKTILSAYVVLRLPYQLAQ. Residues 259 to 279 form a helical membrane-spanning segment; the sequence is LLYLAFLWDVYPGYLLWEALV. Residues 280–282 lie on the Extracellular side of the membrane; it reads YSD. Residues 283–303 traverse the membrane as a helical segment; that stretch reads YLILLNSCLSPFLCLAASADL. Over 304–511 the chain is Cytoplasmic; sequence RALLRTVLSS…PEEAPSAGPT (208 aa). 3 disordered regions span residues 328-349, 361-386, and 407-511; these read PAEPQTLPGPTSEGQSRLDSVV, SDSVVQPEVSPSAQPQSDSVAQPTVG, and PQLD…AGPT. Composition is skewed to polar residues over residues 335–345 and 369–386; these read PGPTSEGQSRL and VSPSAQPQSDSVAQPTVG. Residues 419 to 433 show a composition bias toward low complexity; sequence PSAQPQSKSVVQPQV. Polar residues-rich tracts occupy residues 435 to 453 and 462 to 473; these read PLTQPQLDPVAQPQSNTET and SASNPGEENSSG.

Belongs to the G-protein coupled receptor 1 family.

The protein resides in the cell membrane. Its function is as follows. Orphan receptor. The polypeptide is Probable G-protein coupled receptor 152 (Gpr152) (Mus musculus (Mouse)).